The primary structure comprises 689 residues: DNA topoisomerase 1 (689 aa).

The 111-residue stretch at 3–113 folds into the Toprim domain; that stretch reads DNLVIVESPA…KENRVVFNEI (111 aa). Residues E9 and D82 each contribute to the Mg(2+) site. The 429-residue stretch at 129 to 557 folds into the Topo IA-type catalytic domain; that stretch reads EMNLVDAQQA…FFSSFKQDVE (429 aa). Positions 163–168 are interaction with DNA; sequence SAGRVQ. The active-site O-(5'-phospho-DNA)-tyrosine intermediate is the Y298. The disordered stretch occupies residues 328–356; it reads SKRKASGKQGDQDAHEAIRPSSTMRTPDD. C4-type zinc fingers lie at residues 577–603, 617–645, and 658–681; these read CEIC…FPDC, CPKC…YPEC, and CPKC…CSNC.

This sequence belongs to the type IA topoisomerase family. Monomer. Mg(2+) is required as a cofactor.

The catalysed reaction is ATP-independent breakage of single-stranded DNA, followed by passage and rejoining.. Its function is as follows. Releases the supercoiling and torsional tension of DNA, which is introduced during the DNA replication and transcription, by transiently cleaving and rejoining one strand of the DNA duplex. Introduces a single-strand break via transesterification at a target site in duplex DNA. The scissile phosphodiester is attacked by the catalytic tyrosine of the enzyme, resulting in the formation of a DNA-(5'-phosphotyrosyl)-enzyme intermediate and the expulsion of a 3'-OH DNA strand. The free DNA strand then undergoes passage around the unbroken strand, thus removing DNA supercoils. Finally, in the religation step, the DNA 3'-OH attacks the covalent intermediate to expel the active-site tyrosine and restore the DNA phosphodiester backbone. This is DNA topoisomerase 1 from Staphylococcus aureus (strain USA300).